A 221-amino-acid chain; its full sequence is Proline-rich protein 20A (221 aa).

Disordered stretches follow at residues 1–103 (MEEP…QRQG) and 137–174 (SLSETGPPPGTVQEGPGPDVAQPELGFQEPPAAPGPQA). Residues 42 to 53 (PAQPAQPAKPIA) show a composition bias toward low complexity. Over residues 63–72 (PARPESPPPA) the composition is skewed to pro residues. The segment covering 75–93 (GRRRGGSRRPGRGRGRRAG) has biased composition (basic residues).

It belongs to the PRR20 family.

This chain is Proline-rich protein 20A (PRR20A), found in Homo sapiens (Human).